The chain runs to 107 residues: Cytochrome c oxidase assembly protein COX16 homolog, mitochondrial (107 aa).

The Mitochondrial matrix segment spans residues 1 to 14 (MFGYAVRRALRKSK). A helical transmembrane segment spans residues 15–37 (TLRYGVPMLLLIVGGSFGLREFS). Topologically, residues 38–107 (QIRYDAVKIK…PEILKTNKTT (70 aa)) are mitochondrial intermembrane. Residues 80 to 107 (NIRGPRPWEDPDLLQGRNPEILKTNKTT) are disordered.

It belongs to the COX16 family. In terms of assembly, associates with the MITRAC complex. Interacts with MT-CO2/COX; specifically interacts with newly synthesized MT-CO2/COX. Interacts with SCO1, SCO2 and COA6.

The protein localises to the mitochondrion inner membrane. Functionally, required for the assembly of the mitochondrial respiratory chain complex IV (CIV), also known as cytochrome c oxidase. Promotes the insertion of copper into the active site of cytochrome c oxidase subunit II (MT-CO2/COX2). Interacts specifically with newly synthesized MT-CO2/COX and its copper center-forming metallochaperones SCO1, SCO2 and COA6. Probably facilitates MT-CO2/COX2 association with the MITRAC assembly intermediate containing MT-CO1/COX1, thereby participating in merging the MT-CO1/COX1 and MT-CO2/COX2 assembly lines. In Bos taurus (Bovine), this protein is Cytochrome c oxidase assembly protein COX16 homolog, mitochondrial.